Here is a 584-residue protein sequence, read N- to C-terminus: NADPH-dependent diflavin oxidoreductase 1 (584 aa).

Positions 6–150 (IYILYGSETG…VFAYWCNHLY (145 aa)) constitute a Flavodoxin-like domain. Residues 12-17 (SETGTA), 59-62 (STTG), 97-106 (CGDTSYTRFN), and E132 each bind FMN. In terms of domain architecture, FAD-binding FR-type spans 199–436 (RGKIEATLVH…LPGFLNLSYQ (238 aa)). FAD-binding positions include R343, 373–376 (RQYS), and 407–410 (GICS). Residues T448, 503 to 504 (SR), and 509 to 513 (KKYVQ) each bind NADP(+). Position 584 (W584) interacts with FAD.

This sequence belongs to the NADPH-dependent diflavin oxidoreductase NDOR1 family. In the N-terminal section; belongs to the flavodoxin family. The protein in the C-terminal section; belongs to the flavoprotein pyridine nucleotide cytochrome reductase family. As to quaternary structure, interacts with dre2; as part of the cytosolic iron-sulfur (Fe-S) protein assembly (CIA) machinery. It depends on FAD as a cofactor. FMN serves as cofactor.

The protein resides in the cytoplasm. Its subcellular location is the mitochondrion. It catalyses the reaction 2 oxidized [2Fe-2S]-[protein] + NADPH = 2 reduced [2Fe-2S]-[protein] + NADP(+) + H(+). Its function is as follows. NADPH-dependent reductase which is a central component of the cytosolic iron-sulfur (Fe-S) protein assembly (CIA) machinery. Transfers electrons from NADPH via its FAD and FMN prosthetic groups to the [2Fe-2S] cluster of dre2, another key component of the CIA machinery. In turn, this reduced cluster provides electrons for assembly of cytosolic iron-sulfur cluster proteins. Positively controls H(2)O(2)-induced cell death. The sequence is that of NADPH-dependent diflavin oxidoreductase 1 from Schizosaccharomyces pombe (strain 972 / ATCC 24843) (Fission yeast).